The following is a 217-amino-acid chain: Ras-like protein (217 aa).

Gly-17–Ser-24 serves as a coordination point for GTP. The short motif at Tyr-39–Tyr-47 is the Effector region element. GTP contacts are provided by residues Asp-64 to Gln-68 and Asn-123 to Asp-126. The disordered stretch occupies residues Thr-181–Lys-200. Positions Met-185 to Pro-194 are enriched in gly residues. S-palmitoyl cysteine attachment occurs at residues Cys-210 and Cys-211. At Cys-214 the chain carries Cysteine methyl ester. The S-geranylgeranyl cysteine moiety is linked to residue Cys-214. The propeptide at Val-215–Leu-217 is removed in mature form.

The protein belongs to the small GTPase superfamily. Ras family.

It is found in the cell membrane. It carries out the reaction GTP + H2O = GDP + phosphate + H(+). Alternates between an inactive form bound to GDP and an active form bound to GTP. Activated by a guanine nucleotide-exchange factor (GEF) and inactivated by a GTPase-activating protein (GAP). This chain is Ras-like protein, found in Lentinula edodes (Shiitake mushroom).